The sequence spans 144 residues: Nucleoside diphosphate kinase (144 aa).

Positions 11, 59, 87, 93, 104, and 114 each coordinate ATP. The active-site Pros-phosphohistidine intermediate is the H117.

Belongs to the NDK family. In terms of assembly, homotetramer. Mg(2+) serves as cofactor.

The protein localises to the cytoplasm. The catalysed reaction is a 2'-deoxyribonucleoside 5'-diphosphate + ATP = a 2'-deoxyribonucleoside 5'-triphosphate + ADP. It carries out the reaction a ribonucleoside 5'-diphosphate + ATP = a ribonucleoside 5'-triphosphate + ADP. Its function is as follows. Major role in the synthesis of nucleoside triphosphates other than ATP. The ATP gamma phosphate is transferred to the NDP beta phosphate via a ping-pong mechanism, using a phosphorylated active-site intermediate. The protein is Nucleoside diphosphate kinase of Aliivibrio salmonicida (strain LFI1238) (Vibrio salmonicida (strain LFI1238)).